The primary structure comprises 496 residues: Gamma-aminobutyric acid receptor subunit beta-like (496 aa).

The segment at residues 1-20 is a signal peptide (or 27); the sequence is MTCFTRVGVSCGLFFFLLGA. Topologically, residues 21-258 are extracellular; it reads QLQLIRCIRK…SFKLQRNIGY (238 aa). N-linked (GlcNAc...) asparagine glycans are attached at residues Asn39 and Asn189. The cysteines at positions 176 and 190 are disulfide-linked. A run of 3 helical transmembrane segments spans residues 259–280, 285–306, and 318–342; these read FVFQTYLPSILIVMLSWVSFWI, TSARVALGITTVLTMTTISTGV, and AIDIYLVMCFVFVFAALLEYAAVNY. The Cytoplasmic segment spans residues 343-472; sequence TYWGKRAKKK…KIKDVNIIDK (130 aa). Residues 473-494 traverse the membrane as a helical segment; it reads YSRMIFPISFLAFNLGYWLFYI.

This sequence belongs to the ligand-gated ion channel (TC 1.A.9) family. Gamma-aminobutyric acid receptor (TC 1.A.9.5) subfamily. In terms of assembly, generally pentameric. There are five types of GABA(A) receptor chains: alpha, beta, gamma, delta, and rho. Interacts with Grd (alpha chain).

Its subcellular location is the postsynaptic cell membrane. The protein localises to the cell membrane. Functionally, GABA, an inhibitory neurotransmitter, mediates neuronal inhibition by binding to the GABA receptor and opening an integral chloride channel. Combines with the ligand-gated ion channel subunit GRD to form cation-selective GABA-gated ion channels when coexpressed in Xenopus laevis oocytes. The polypeptide is Gamma-aminobutyric acid receptor subunit beta-like (Lcch3) (Drosophila melanogaster (Fruit fly)).